The following is a 1075-amino-acid chain: Flocculation protein FLO5 (1075 aa).

Positions 1–24 are cleaved as a signal peptide; the sequence is MTIAHHCIFLVILAFLALINVASG. Residues 74–249 enclose the PA14 domain; the sequence is GGQTDISIDY…GTTVSDNFEG (176 aa). Residues Asn135, Asn187, Asn203, and Asn262 are each glycosylated (N-linked (GlcNAc...) asparagine). Positions 197–240 are sugar recognition; it reads DGSLPDNITGTVYMYAGYYYPLKVVYSNAVSWGTLPISVELPDG. 8 consecutive repeat copies span residues 278 to 322, 323 to 367, 368 to 412, 413 to 457, 458 to 502, 503 to 547, 548 to 592, and 593 to 637. An 8 X 45 AA approximate tandem repeats, Thr-rich region spans residues 278–637; the sequence is TTTEPWTGTF…RTPTTAISSS (360 aa). Low complexity-rich tracts occupy residues 322–345, 367–390, 457–480, and 547–570; these read TTTTEPWTGTFTSTSTEMTTVTGT. Disordered regions lie at residues 322-349, 366-394, 456-484, and 546-574; these read TTTTEPWTGTFTSTSTEMTTVTGTNGQP and ITTTTEPWTGTFTSTSTEMTTVTGTNGQP. N-linked (GlcNAc...) asparagine glycosylation occurs at Asn663. 2 tandem repeats follow at residues 667–686 and 687–706. The 2 X 20 AA approximate tandem repeats, Ser-rich stretch occupies residues 667 to 706; that stretch reads VISSSVISSSVTSSLVTSSSFISSSVISSSTTTSTSIFSE. Over residues 702-762 the composition is skewed to low complexity; sequence SIFSESSTSS…SLPPVTSATT (61 aa). Residues 702-781 form a disordered region; the sequence is SIFSESSTSS…PATTTKTSEQ (80 aa). N-linked (GlcNAc...) asparagine glycosylation is present at Asn749. A compositionally biased stretch (polar residues) spans 763–781; the sequence is GQETASSLPPATTTKTSEQ. 3 repeat units span residues 775–825, 847–897, and 898–948. The interval 775-948 is 3 X 51 AA approximate repeats, Ser/Thr-rich; it reads TTKTSEQTTL…TVYPTWRPQT (174 aa). Positions 948-958 are enriched in polar residues; it reads TTNEQSVSSKM. Disordered regions lie at residues 948–980 and 1016–1038; these read TTNEQSVSSKMNSATSETTTNTGAAETKTAVTS and SLTSSGLSTMSQQPRSTPASSMV. Low complexity-rich tracts occupy residues 959-977 and 1016-1026; these read NSATSETTTNTGAAETKTA and SLTSSGLSTMS. Residues 1027–1038 show a composition bias toward polar residues; it reads QQPRSTPASSMV. Gly1052 carries the GPI-anchor amidated glycine lipid modification. Residues 1053 to 1075 constitute a propeptide, removed in mature form; sequence SANSLLAGSGLSVFIASLLLAII.

It belongs to the flocculin family. Extensively O-glycosylated. Post-translationally, the GPI-anchor is attached to the protein in the endoplasmic reticulum and serves to target the protein to the cell surface. There, the glucosamine-inositol phospholipid moiety is cleaved off and the GPI-modified mannoprotein is covalently attached via its lipidless GPI glycan remnant to the 1,6-beta-glucan of the outer cell wall layer.

The protein resides in the secreted. It localises to the cell wall. The protein localises to the membrane. Cell wall protein that participates directly in adhesive cell-cell interactions during yeast flocculation, a reversible, asexual and Ca(2+)-dependent process in which cells adhere to form aggregates (flocs) consisting of thousands of cells. The lectin-like protein sticks out of the cell wall of flocculent cells and selectively binds mannose residues in the cell walls of adjacent cells. Activity is inhibited by mannose, but not by glucose, maltose, sucrose or galactose. In Saccharomyces cerevisiae (strain ATCC 204508 / S288c) (Baker's yeast), this protein is Flocculation protein FLO5 (FLO5).